We begin with the raw amino-acid sequence, 568 residues long: Light-independent protochlorophyllide reductase subunit B (568 aa).

Aspartate 36 contacts [4Fe-4S] cluster. Residue aspartate 293 is the Proton donor of the active site. Glycine 437–methionine 438 contacts substrate. Residues alanine 476–proline 517 form a disordered region. The segment covering serine 498 to valine 515 has biased composition (polar residues).

This sequence belongs to the ChlB/BchB/BchZ family. Protochlorophyllide reductase is composed of three subunits; BchL, BchN and BchB. Forms a heterotetramer of two BchB and two BchN subunits. [4Fe-4S] cluster is required as a cofactor.

The catalysed reaction is chlorophyllide a + oxidized 2[4Fe-4S]-[ferredoxin] + 2 ADP + 2 phosphate = protochlorophyllide a + reduced 2[4Fe-4S]-[ferredoxin] + 2 ATP + 2 H2O. The protein operates within porphyrin-containing compound metabolism; bacteriochlorophyll biosynthesis (light-independent). In terms of biological role, component of the dark-operative protochlorophyllide reductase (DPOR) that uses Mg-ATP and reduced ferredoxin to reduce ring D of protochlorophyllide (Pchlide) to form chlorophyllide a (Chlide). This reaction is light-independent. The NB-protein (BchN-BchB) is the catalytic component of the complex. This Roseiflexus sp. (strain RS-1) protein is Light-independent protochlorophyllide reductase subunit B.